Reading from the N-terminus, the 325-residue chain is Tetraacyldisaccharide 4'-kinase (325 aa).

55–62 contacts ATP; sequence TAGGNGKT.

Belongs to the LpxK family.

The catalysed reaction is a lipid A disaccharide + ATP = a lipid IVA + ADP + H(+). Its pathway is glycolipid biosynthesis; lipid IV(A) biosynthesis; lipid IV(A) from (3R)-3-hydroxytetradecanoyl-[acyl-carrier-protein] and UDP-N-acetyl-alpha-D-glucosamine: step 6/6. Its function is as follows. Transfers the gamma-phosphate of ATP to the 4'-position of a tetraacyldisaccharide 1-phosphate intermediate (termed DS-1-P) to form tetraacyldisaccharide 1,4'-bis-phosphate (lipid IVA). This Salmonella paratyphi C (strain RKS4594) protein is Tetraacyldisaccharide 4'-kinase.